The chain runs to 416 residues: Chorismate synthase (416 aa).

R40 and R46 together coordinate NADP(+). FMN-binding positions include 135–137 (RAS), 256–257 (QA), G300, 315–319 (KPIAT), and R341.

It belongs to the chorismate synthase family. In terms of assembly, homotetramer. FMNH2 serves as cofactor.

The catalysed reaction is 5-O-(1-carboxyvinyl)-3-phosphoshikimate = chorismate + phosphate. It functions in the pathway metabolic intermediate biosynthesis; chorismate biosynthesis; chorismate from D-erythrose 4-phosphate and phosphoenolpyruvate: step 7/7. Its function is as follows. Catalyzes the anti-1,4-elimination of the C-3 phosphate and the C-6 proR hydrogen from 5-enolpyruvylshikimate-3-phosphate (EPSP) to yield chorismate, which is the branch point compound that serves as the starting substrate for the three terminal pathways of aromatic amino acid biosynthesis. This reaction introduces a second double bond into the aromatic ring system. In Kocuria rhizophila (strain ATCC 9341 / DSM 348 / NBRC 103217 / DC2201), this protein is Chorismate synthase.